Consider the following 108-residue polypeptide: Abdominal ganglion neuropeptide R3-14 (108 aa).

A signal peptide spans 1–23; that stretch reads MQVLHLCLAVSIAVALLSQAAWS. A pyrrolidone carboxylic acid (Glu); partial mark is found at glutamate 24 and glutamate 52. Pyrrolidone carboxylic acid is present on glutamine 66.

In terms of processing, the partial formation of pyroglutamate from N-terminal glutamic acid in peptides isolated from single cells is detected by mass spectrometry. There are indications this modification depends on a heat sensitive factor. In terms of tissue distribution, neurons R3-R14. A cluster of 12 giant neurons located on the right side of the abdominal ganglion.

It localises to the secreted. HRBP is a myoactive peptide that excites Aplysia heart and enhances gut motility in vitro. The chain is Abdominal ganglion neuropeptide R3-14 from Aplysia californica (California sea hare).